The chain runs to 313 residues: Fructose-1,6-bisphosphatase class 1 (313 aa).

Mg(2+) contacts are provided by Glu91, Asp112, Leu114, and Asp115. Substrate contacts are provided by residues 115 to 118, Tyr223, and Lys254; that span reads DGSS. Glu260 contacts Mg(2+).

This sequence belongs to the FBPase class 1 family. Homotetramer. Mg(2+) serves as cofactor.

It localises to the cytoplasm. It catalyses the reaction beta-D-fructose 1,6-bisphosphate + H2O = beta-D-fructose 6-phosphate + phosphate. It functions in the pathway carbohydrate biosynthesis; gluconeogenesis. This is Fructose-1,6-bisphosphatase class 1 from Geobacter sulfurreducens (strain ATCC 51573 / DSM 12127 / PCA).